We begin with the raw amino-acid sequence, 855 residues long: Envelope glycoprotein gp150 (855 aa).

The Extracellular portion of the chain corresponds to 1–784 (MAEGFAANRQ…WIGNIPQYLK (784 aa)). Asn-220, Asn-258, Asn-269, Asn-274, Asn-298, Asn-336, Asn-418, Asn-422, Asn-448, Asn-469, Asn-481, Asn-499, Asn-518, Asn-531, Asn-548, and Asn-551 each carry an N-linked (GlcNAc...) asparagine; by host glycan. Residues 615–635 (VMLALATVLSMAGAGTGATAI) form a fusion peptide region. The stretch at 642–692 (HQVLATHQETIEKVTEALKINNLRLVTLEHQVLVIGLKVEAMEKFLYTAFA) forms a coiled coil. Positions 661–679 (INNLRLVTLEHQVLVIGLK) are immunosuppression. Asn-716, Asn-720, Asn-728, and Asn-736 each carry an N-linked (GlcNAc...) asparagine; by host glycan. The stretch at 735–771 (YNQTKELQQKFYEIIMNIEQNNVQVKKGLQQLQEWED) forms a coiled coil. The chain crosses the membrane as a helical span at residues 785-805 (GLLGGILGIGIGVLLLILCLP). Topologically, residues 806-855 (TLVDCIRNCISKVLGYTVIAMPEIGDEEETVQMELRKNGRQCGMSEKEEE) are cytoplasmic.

The mature envelope protein (Env) consists of a trimer of SU-TM heterodimers attached by noncovalent interactions or by a labile interchain disulfide bond. Post-translationally, specific enzymatic cleavages in vivo yield mature proteins. Envelope glycoproteins are synthesized as an inactive precursor that is N-glycosylated and processed likely by host cell furin or by a furin-like protease in the Golgi to yield the mature SU and TM proteins. The cleavage site between SU and TM requires the minimal sequence [KR]-X-[KR]-R.

The protein localises to the virion membrane. Its subcellular location is the host cell membrane. Its function is as follows. The surface protein (SU) attaches the virus to the host cell by binding to its receptor. This interaction triggers the refolding of the transmembrane protein (TM) and is thought to activate its fusogenic potential by unmasking its fusion peptide. Fusion occurs at the host cell plasma membrane. Functionally, the transmembrane protein (TM) acts as a class I viral fusion protein. Under the current model, the protein has at least 3 conformational states: pre-fusion native state, pre-hairpin intermediate state, and post-fusion hairpin state. During viral and target cell membrane fusion, the coiled coil regions (heptad repeats) assume a trimer-of-hairpins structure, positioning the fusion peptide in close proximity to the C-terminal region of the ectodomain. The formation of this structure appears to drive apposition and subsequent fusion of viral and target cell membranes. Membranes fusion leads to delivery of the nucleocapsid into the cytoplasm. In Felidae (cat family), this protein is Envelope glycoprotein gp150 (env).